A 114-amino-acid chain; its full sequence is Dihydroneopterin monophosphate aldolase (114 aa).

3 residues coordinate Zn(2+): histidine 15, histidine 26, and histidine 28.

Belongs to the PTPS family. Zn(2+) is required as a cofactor.

The catalysed reaction is 7,8-dihydroneopterin 3'-phosphate = glycolaldehyde phosphate + 6-hydroxymethyl-7,8-dihydropterin. Functionally, catalyzes the conversion of 7,8-dihydroneopterin monophosphate (H2NMP) to 6-hydroxymethyl-7,8-dihydropterin (6-HMD). Cannot use 7,8-dihydroneopterin (H2Neo) or 7,8-dihydroneopterin triphosphate (H2NTP) as substrate. In Pyrococcus furiosus (strain ATCC 43587 / DSM 3638 / JCM 8422 / Vc1), this protein is Dihydroneopterin monophosphate aldolase.